The following is a 445-amino-acid chain: O-fucosyltransferase 23 (445 aa).

A helical; Signal-anchor for type II membrane protein transmembrane segment spans residues 12–34; sequence IFSKSVACKCLVLVGIALFYRAL. Asn97 and Asn179 each carry an N-linked (GlcNAc...) asparagine glycan. 258–260 contributes to the substrate binding site; it reads HMR. N-linked (GlcNAc...) asparagine glycosylation is present at Asn294. 374-375 contacts substrate; it reads TF. A glycan (N-linked (GlcNAc...) asparagine) is linked at Asn424.

The protein belongs to the glycosyltransferase GT106 family. As to expression, expressed in dry pollen grains and germinating pollen grains.

The protein resides in the golgi apparatus membrane. Its pathway is glycan metabolism. Its function is as follows. Probable protein O-fucosyltransferase required for correct pollen tube penetration through the stigma-style interface. May be involved in protein O-glycosylation events during pollen-pistil interactions. This Arabidopsis thaliana (Mouse-ear cress) protein is O-fucosyltransferase 23.